The following is a 2285-amino-acid chain: AT-rich interactive domain-containing protein 1A (2285 aa).

Positions 1-14 are enriched in low complexity; that stretch reads MAAQVAPAAASSLG. 2 disordered regions span residues 1 to 820 and 978 to 1005; these read MAAQ…ALPN and ATKM…TTTN. A2 carries the N-acetylalanine modification. Basic and acidic residues predominate over residues 23 to 35; sequence ELKKAEQQQREEA. A phosphoserine mark is found at S58 and S79. Composition is skewed to gly residues over residues 79–95 and 121–130; these read SNGG…GGPG and PGGGGGGSSD. Low complexity-rich tracts occupy residues 131–142, 212–221, and 228–265; these read GVGAPPHSAAAA, YNSYYPNRSA, and AYAL…SSSS. S233 carries the post-translational modification Phosphoserine. The span at 273–286 shows a compositional bias: gly residues; the sequence is AMGGGGPSAAGGGT. Position 286 is a phosphothreonine (T286). An LXXLL motif is present at residues 295–299; the sequence is LNQLL. The segment covering 295–306 has biased composition (polar residues); it reads LNQLLTSPSSAR. The residue at position 301 (S301) is a Phosphoserine. The segment covering 310–327 has biased composition (gly residues); that stretch reads GYPGGDYSGGPQDGGAGK. Residues 338-353 are compositionally biased toward low complexity; the sequence is GAAAAAAAAAAASGGA. Phosphoserine occurs at positions 363 and 382. Positions 400-425 are enriched in low complexity; that stretch reads PYSQQQGPPSGPQQGHGYPGQPYGSQ. Asymmetric dimethylarginine is present on R429. Composition is skewed to low complexity over residues 447–457, 465–546, and 553–595; these read YTQQIPPYGQQ, QGQT…QHPQ, and QPQA…YSQQ. The residue at position 604 (S604) is a Phosphoserine. Over residues 610 to 621 the composition is skewed to low complexity; it reads SQASSAPSMTSS. Over residues 628–637 the composition is skewed to polar residues; the sequence is MNLSLQSRPS. A compositionally biased stretch (low complexity) spans 658–674; that stretch reads SPGVSTSGISSSQGEQS. Residues 675-685 show a composition bias toward polar residues; the sequence is NPAQSPFSPHT. Residues S696, S698, S702, S730, S764, and S772 each carry the phosphoserine modification. Polar residues-rich tracts occupy residues 730 to 747 and 755 to 793; these read SGQS…SSIA and RNPQ…QNSM. Residues 797 to 807 are compositionally biased toward gly residues; that stretch reads GPQGGQYGPQG. A compositionally biased stretch (low complexity) spans 808–820; that stretch reads GYPRQPNYNALPN. The ARID domain maps to 1017–1108; sequence EPERKMWVDR…CLYAFECKIE (92 aa). 2 disordered regions span residues 1113–1483 and 1539–1603; these read PPPD…MMGG and ANHE…SPSK. The span at 1141–1154 shows a compositional bias: low complexity; it reads MQGPQTPQSTSSSM. Positions 1162 to 1177 are enriched in pro residues; that stretch reads PPTPASTPHSQIPPLP. Phosphoserine is present on S1184. Over residues 1194–1219 the composition is skewed to polar residues; that stretch reads GSDSTFQKRNSMTPNPGYQPSMNTSD. S1235 bears the Phosphoserine mark. R1276 is modified (omega-N-methylarginine). Polar residues-rich tracts occupy residues 1299–1315 and 1339–1356; these read NMST…SNPD and YGNQ…PFPS. A compositionally biased stretch (low complexity) spans 1357 to 1367; that stretch reads QQTTMYQQQQQ. The Nuclear localization signal motif lies at 1368–1387; it reads NYKRPMDGTYGPPAKRHEGE. Low complexity predominate over residues 1396–1425; that stretch reads GQGQPQQQQLPPAQPQPASQQQAAQPSPQQ. Polar residues predominate over residues 1468 to 1477; the sequence is PGTNAQQNMP. Residues 1554 to 1577 show a composition bias toward pro residues; it reads PYGPSAPVPPMTRPPPSNYQPPPS. The residue at position 1604 (S1604) is a Phosphoserine. K1612 bears the N6-acetyllysine mark. An LXXLL motif is present at residues 1709-1713; it reads LPGLL. 2 disordered regions span residues 1747–1774 and 1859–1907; these read PGRF…PKLE and FESK…EKRI. Phosphoserine occurs at positions 1751 and 1754. Positions 1761–1774 are enriched in acidic residues; the sequence is GGEEEEELLGPKLE. The span at 1886-1895 shows a compositional bias: low complexity; the sequence is EGTPGTTDQE. At T1888 the chain carries Phosphothreonine. Residue K1905 is modified to N6-acetyllysine. Phosphoserine is present on residues S1929 and S1944. 2 short sequence motifs (LXXLL) span residues 1967-1971 and 2085-2089; these read LCTLL and LDGLL.

In terms of assembly, component of SWI/SNF chromatin remodeling complexes, in some of which it can be mutually exclusive with ARID1B/BAF250B. The canonical complex contains a catalytic subunit (either SMARCA4/BRG1/BAF190A or SMARCA2/BRM/BAF190B) and at least SMARCE1, ACTL6A/BAF53, SMARCC1/BAF155, SMARCC2/BAF170, and SMARCB1/SNF5/BAF47. Other subunits specific to each of the complexes may also be present permitting several possible combinations developmentally and tissue specific. Component of the BAF (SWI/SNF-A) complex, which includes at least actin (ACTB), ARID1A/BAF250A, ARID1B/BAF250B, SMARCA2/BRM, SMARCA4/BRG1/BAF190A, ACTL6A/BAF53, ACTL6B/BAF53B, SMARCE1/BAF57, SMARCC1/BAF155, SMARCC2/BAF170, SMARCB1/SNF5/INI1, and one or more SMARCD1/BAF60A, SMARCD2/BAF60B, or SMARCD3/BAF60C. In muscle cells, the BAF complex also contains DPF3. Component of neural progenitors-specific chromatin remodeling complex (npBAF complex) composed of at least, ARID1A/BAF250A or ARID1B/BAF250B, SMARCD1/BAF60A, SMARCD3/BAF60C, SMARCA2/BRM/BAF190B, SMARCA4/BRG1/BAF190A, SMARCB1/BAF47, SMARCC1/BAF155, SMARCE1/BAF57, SMARCC2/BAF170, PHF10/BAF45A, ACTL6A/BAF53A and actin. Component of neuron-specific chromatin remodeling complex (nBAF complex) composed of at least, ARID1A/BAF250A or ARID1B/BAF250B, SMARCD1/BAF60A, SMARCD3/BAF60C, SMARCA2/BRM/BAF190B, SMARCA4/BRG1/BAF190A, SMARCB1/BAF47, SMARCC1/BAF155, SMARCE1/BAF57, SMARCC2/BAF170, DPF1/BAF45B, DPF3/BAF45C, ACTL6B/BAF53B and actin. Component of a SWI/SNF-like EBAFa complex, at least composed of SMARCA4/BRG1/BAF190A, SMARCB1/BAF47/SNF5, ACTL6A/BAF53A, SMARCE1/BAF57, SMARCD1/BAF60A, SMARCC1/BAF155, SMARCC2/BAF170, BAF250A and MLLT1/ENL. Interacts through its C-terminus with SMARCA2/BRM/BAF190B and SMARCA4/BRG1/BAF190A. Interacts with SMARCC1/BAF155. Interacts with FOS, FOSB isoform 1 and 2, FOSL1 and FOSL2. As to expression, highly expressed in spleen, thymus, prostate, testis, ovary, small intestine, colon, and PBL, and at a much lower level in heart, brain, placenta, lung, liver, skeletal muscle, kidney, and pancreas.

Its subcellular location is the nucleus. Its function is as follows. Involved in transcriptional activation and repression of select genes by chromatin remodeling (alteration of DNA-nucleosome topology). Component of SWI/SNF chromatin remodeling complexes that carry out key enzymatic activities, changing chromatin structure by altering DNA-histone contacts within a nucleosome in an ATP-dependent manner. Binds DNA non-specifically. Belongs to the neural progenitors-specific chromatin remodeling complex (npBAF complex) and the neuron-specific chromatin remodeling complex (nBAF complex). During neural development a switch from a stem/progenitor to a postmitotic chromatin remodeling mechanism occurs as neurons exit the cell cycle and become committed to their adult state. The transition from proliferating neural stem/progenitor cells to postmitotic neurons requires a switch in subunit composition of the npBAF and nBAF complexes. As neural progenitors exit mitosis and differentiate into neurons, npBAF complexes which contain ACTL6A/BAF53A and PHF10/BAF45A, are exchanged for homologous alternative ACTL6B/BAF53B and DPF1/BAF45B or DPF3/BAF45C subunits in neuron-specific complexes (nBAF). The npBAF complex is essential for the self-renewal/proliferative capacity of the multipotent neural stem cells. The nBAF complex along with CREST plays a role regulating the activity of genes essential for dendrite growth. The protein is AT-rich interactive domain-containing protein 1A (ARID1A) of Homo sapiens (Human).